A 250-amino-acid chain; its full sequence is tRNA (guanine-N(1)-)-methyltransferase (250 aa).

Residues glycine 116 and 136-141 (IGDYVL) contribute to the S-adenosyl-L-methionine site.

Belongs to the RNA methyltransferase TrmD family. As to quaternary structure, homodimer.

It is found in the cytoplasm. The enzyme catalyses guanosine(37) in tRNA + S-adenosyl-L-methionine = N(1)-methylguanosine(37) in tRNA + S-adenosyl-L-homocysteine + H(+). Specifically methylates guanosine-37 in various tRNAs. The protein is tRNA (guanine-N(1)-)-methyltransferase of Pseudomonas putida (strain ATCC 47054 / DSM 6125 / CFBP 8728 / NCIMB 11950 / KT2440).